We begin with the raw amino-acid sequence, 108 residues long: DIQMTQTTSSLSASLGDRVTISCSASQSIGNYLBWYQQKPDGTVKLLIYYTSSLHSGVPSRFSGSGSGTDYSLTISBLZPZBIATYYCQQYSKLPRTFGGGTKLEIKR.

Positions 1–23 (DIQMTQTTSSLSASLGDRVTISC) are framework-1. Cysteines 23 and 88 form a disulfide. Positions 24–34 (SASQSIGNYLB) are complementarity-determining-1. Residues 35–49 (WYQQKPDGTVKLLIY) form a framework-2 region. Residues 50–56 (YTSSLHS) are complementarity-determining-2. Residues 57–88 (GVPSRFSGSGSGTDYSLTISBLZPZBIATYYC) are framework-3. Positions 89–97 (QQYSKLPRT) are complementarity-determining-3. Residues 98–108 (FGGGTKLEIKR) are framework-4.

This is Ig kappa chain V-V region MOPC 173 from Mus musculus (Mouse).